The following is an 801-amino-acid chain: Na(+)/H(+) antiporter subunit A1 (801 aa).

20 consecutive transmembrane segments (helical) span residues 1-21 (MSLLHIAVLLPLIFALIIPFL), 30-50 (LGWFVLPVPIVLFIYFISLIS), 79-99 (LGLLFSLLITGIGSLVVLYSI), 117-137 (LFMGAMLGVVLSDNFIILYLF), 166-186 (LIITVLGGLSMLGGIILLSLA), 206-226 (PFFILVMILFMIGAFTKSAQV), 228-250 (FYIWLPDAMEAPTPVSAYLHSAT), 265-285 (IFAISEGWVWTITLVGLITLF), 300-320 (ILAFSTVSQLGMIMSMLGIGA), 337-357 (FVAAIFHLINHATFKGALFMI), 373-393 (LGGLLTIMPISFTLTVITTLS), 427-447 (LGILLPIIAIIGSIFTFVYSI), 472-492 (ILMLISPIILTSLVIVFGLFP), 522-542 (GITPAFLSTIGIYIIGILLLI), 591-611 (LVIILGILIALTFVTVISVPF), 623-643 (VFEGATVLFLLIASTFIIFAK), 646-666 (LFSIIMLSAVGYAISVLFIFF), 671-691 (LALTQFVVESISTALFLLCFY), 707-727 (LTNAVISIGVGLSVIILGLIG), and 764-784 (MDTLFESSVLGIAGLGVYTMI).

This sequence belongs to the CPA3 antiporters (TC 2.A.63) subunit A family. As to quaternary structure, may form a heterooligomeric complex that consists of seven subunits: mnhA1, mnhB1, mnhC1, mnhD1, mnhE1, mnhF1 and mnhG1.

The protein resides in the cell membrane. Functionally, mnh complex is a Na(+)/H(+) antiporter involved in Na(+) excretion. The protein is Na(+)/H(+) antiporter subunit A1 (mnhA1) of Staphylococcus epidermidis (strain ATCC 35984 / DSM 28319 / BCRC 17069 / CCUG 31568 / BM 3577 / RP62A).